The primary structure comprises 105 residues: Nucleoid-associated protein RPC_4847 (105 aa).

The protein belongs to the YbaB/EbfC family. As to quaternary structure, homodimer.

The protein localises to the cytoplasm. It localises to the nucleoid. Functionally, binds to DNA and alters its conformation. May be involved in regulation of gene expression, nucleoid organization and DNA protection. This chain is Nucleoid-associated protein RPC_4847, found in Rhodopseudomonas palustris (strain BisB18).